A 242-amino-acid polypeptide reads, in one-letter code: MGHKIHPTGLRLGITQEHRSRWYATSKMYPILLQEDDRIRRFIHKKYGAAGISDVLIARKADQLEVELKTARPGVLVGRQGSGIEELRTGIQKTIGDHSRQVRINVVEVERVDADAFLLAEYIAQQLEKRVAFRRTIRMAVQRAQRAGVLGLKIQVGGRLNGAEIARTEWTREGRVPLHTLRAEIDYATKVASTTYGVLGIKVWIFKGEVLGDEAQTMPVGASPRRRGNRRPQQFEDRSNEG.

Residues 39–110 (IRRFIHKKYG…QVRINVVEVE (72 aa)) form the KH type-2 domain. Residues 217–242 (TMPVGASPRRRGNRRPQQFEDRSNEG) are disordered. Residues 233-242 (QQFEDRSNEG) show a composition bias toward basic and acidic residues.

It belongs to the universal ribosomal protein uS3 family. As to quaternary structure, part of the 30S ribosomal subunit. Forms a tight complex with proteins S10 and S14.

In terms of biological role, binds the lower part of the 30S subunit head. Binds mRNA in the 70S ribosome, positioning it for translation. The sequence is that of Small ribosomal subunit protein uS3 from Prochlorococcus marinus (strain MIT 9313).